The primary structure comprises 491 residues: Aspartyl/glutamyl-tRNA(Asn/Gln) amidotransferase subunit B (491 aa).

The protein belongs to the GatB/GatE family. GatB subfamily. In terms of assembly, heterotrimer of A, B and C subunits.

It carries out the reaction L-glutamyl-tRNA(Gln) + L-glutamine + ATP + H2O = L-glutaminyl-tRNA(Gln) + L-glutamate + ADP + phosphate + H(+). It catalyses the reaction L-aspartyl-tRNA(Asn) + L-glutamine + ATP + H2O = L-asparaginyl-tRNA(Asn) + L-glutamate + ADP + phosphate + 2 H(+). Functionally, allows the formation of correctly charged Asn-tRNA(Asn) or Gln-tRNA(Gln) through the transamidation of misacylated Asp-tRNA(Asn) or Glu-tRNA(Gln) in organisms which lack either or both of asparaginyl-tRNA or glutaminyl-tRNA synthetases. The reaction takes place in the presence of glutamine and ATP through an activated phospho-Asp-tRNA(Asn) or phospho-Glu-tRNA(Gln). This is Aspartyl/glutamyl-tRNA(Asn/Gln) amidotransferase subunit B from Burkholderia cenocepacia (strain HI2424).